Here is a 2798-residue protein sequence, read N- to C-terminus: Nipped-B-like protein (2798 aa).

Composition is skewed to polar residues over residues 128–173 and 191–208; these read LSQN…QNSP and HPSSYTTHPQMQQASVSS. Residues 128 to 338 form a disordered region; the sequence is LSQNSMHSSP…IKLGKDEKDQ (211 aa). A phosphoserine mark is found at S150 and S162. Basic and acidic residues predominate over residues 234-249; sequence HHADNPRHGSSDDYLH. Residues S243, S256, S274, S280, S284, S301, S306, S318, and S350 each carry the phosphoserine modification. Residues 482–500 are compositionally biased toward basic and acidic residues; that stretch reads RESAIERERFSKEVQDKDK. The tract at residues 482-940 is disordered; that stretch reads RESAIERERF…NKAEFPSYLL (459 aa). Residues 523–534 are compositionally biased toward polar residues; it reads PASQETGSTGNG. 5 stretches are compositionally biased toward basic and acidic residues: residues 562–572, 593–625, 634–663, 672–685, and 694–899; these read DSIKKPEETKQ, PENHPETPKKKSDPELSKSEMKQNESRLSESKP, KSNESKLETKTETPTEELKQNENKTTESKQ, KQNENRPCDTKPND, and ENTK…DTNK. T713 and T746 each carry phosphothreonine. S906 carries the post-translational modification Phosphoserine. A compositionally biased stretch (basic and acidic residues) spans 908–933; it reads NSKDDKRTEGNRSKVDSNKAHTDNKA. The short motif at 990–1003 is the PxVxL motif element; that stretch reads NKGAKPVVVLQKLS. Disordered regions lie at residues 1011–1041 and 1054–1186; these read IKDREEKSRSSLKSIKNKPSKSNKGSIDQSV and ESTM…TPEE. K1076 carries the N6-acetyllysine modification. 3 positions are modified to phosphoserine: S1083, S1084, and S1090. The span at 1083–1094 shows a compositional bias: acidic residues; the sequence is SSDEDNDSDEAF. Positions 1103 to 1133 are enriched in basic and acidic residues; that stretch reads KDDDKAWEYEERDRRSSGDHRRSGHSHDGRR. 3 positions are modified to phosphoserine: S1144, S1146, and S1148. Phosphotyrosine is present on Y1153. Phosphoserine is present on S1154. A compositionally biased stretch (basic residues) spans 1165 to 1176; the sequence is KMKKKEKQKKRK. Phosphothreonine is present on T1183. S1191 carries the phosphoserine modification. A compositionally biased stretch (basic and acidic residues) spans 1685-1705; sequence AMKSQKDEESSDATHHAKELE. The disordered stretch occupies residues 1685–1706; it reads AMKSQKDEESSDATHHAKELET. HEAT repeat units lie at residues 1761–1799, 1837–1875, 1939–1978, 2221–2261, and 2307–2345; these read AQSFDIYLTQILRVLGENAIAVRTKAMKCLSEVVAVDPS, PQLAEQYYDMLIERILDTGISVRKRVIKILRDICIEQPT, YDWFEQLLQNLLKSEEDSSYKPVKKACTQLVDNLVEHILK, VNLK…LKEM, and LIHPVQCVPYLIAMGTDPEPAMRNKADQQLVEIDKKYAG. Residues 2467–2483 are compositionally biased toward basic and acidic residues; that stretch reads VKDKRKERKTSPAKENE. Disordered regions lie at residues 2467–2514 and 2645–2690; these read VKDK…DDIN and TSLL…DSTE. A phosphoserine mark is found at S2487, S2503, S2505, S2507, S2509, S2646, and S2652. Over residues 2504 to 2513 the composition is skewed to acidic residues; that stretch reads ESDSDSEDDI. T2661 is subject to Phosphothreonine. S2666 is modified (phosphoserine).

The protein belongs to the SCC2/Nipped-B family. In terms of assembly, heterodimerizes with MAU2/SCC4 to form the cohesin loading complex. The NIPBL-MAU2 heterodimer interacts with the cohesin complex composed of SMC1A/B and SMC3 heterodimer, RAD21 and STAG1/SA1. NIPBL directly contacts all members of the complex, RAD21, SMC1A/B, SMC3 and STAG1. Interacts directly (via PxVxL motif) with CBX3 and CBX5. Interacts with ZNF609 (via N-terminus). Interacts with the multiprotein complex Integrator. Interacts with BRD4. Spermatocytes and oocytes (at protein level).

It localises to the nucleus. Its subcellular location is the chromosome. Functionally, plays an important role in the loading of the cohesin complex on to DNA. Forms a heterodimeric complex (also known as cohesin loading complex) with MAU2/SCC4 which mediates the loading of the cohesin complex onto chromatin. Plays a role in cohesin loading at sites of DNA damage. Its recruitment to double-strand breaks (DSBs) sites occurs in a CBX3-, RNF8- and RNF168-dependent manner whereas its recruitment to UV irradiation-induced DNA damage sites occurs in a ATM-, ATR-, RNF8- and RNF168-dependent manner. Along with ZNF609, promotes cortical neuron migration during brain development by regulating the transcription of crucial genes in this process. Preferentially binds promoters containing paused RNA polymerase II. Up-regulates the expression of SEMA3A, NRP1, PLXND1 and GABBR2 genes, among others. In Mus musculus (Mouse), this protein is Nipped-B-like protein (Nipbl).